We begin with the raw amino-acid sequence, 114 residues long: Ribonuclease P protein component (114 aa).

Belongs to the RnpA family. In terms of assembly, consists of a catalytic RNA component (M1 or rnpB) and a protein subunit.

It carries out the reaction Endonucleolytic cleavage of RNA, removing 5'-extranucleotides from tRNA precursor.. In terms of biological role, RNaseP catalyzes the removal of the 5'-leader sequence from pre-tRNA to produce the mature 5'-terminus. It can also cleave other RNA substrates such as 4.5S RNA. The protein component plays an auxiliary but essential role in vivo by binding to the 5'-leader sequence and broadening the substrate specificity of the ribozyme. This chain is Ribonuclease P protein component, found in Exiguobacterium sp. (strain ATCC BAA-1283 / AT1b).